The chain runs to 122 residues: Urease subunit beta (122 aa).

Belongs to the urease beta subunit family. In terms of assembly, heterotrimer of UreA (gamma), UreB (beta) and UreC (alpha) subunits. Three heterotrimers associate to form the active enzyme.

It localises to the cytoplasm. The catalysed reaction is urea + 2 H2O + H(+) = hydrogencarbonate + 2 NH4(+). The protein operates within nitrogen metabolism; urea degradation; CO(2) and NH(3) from urea (urease route): step 1/1. The polypeptide is Urease subunit beta (Acetivibrio thermocellus (strain ATCC 27405 / DSM 1237 / JCM 9322 / NBRC 103400 / NCIMB 10682 / NRRL B-4536 / VPI 7372) (Clostridium thermocellum)).